The chain runs to 275 residues: MQVGIVARKGSERAVAVADELRDAVAGAGASVWLDAETADALGEPAAGREVDALADCDLAVAVGGDGTFLFVARNAGDTPIVGVNLGEVGFLNAVPPEAAEEAVVSEVEAFDRGEMNVREAPRLAARTDEWTSVPAANEVVIQGARRGPGAGIDYEVRVDGSRYAGGHADGVLVATPTGSTAYNLSEGGPLVHPAVSGLVVNEMVAEEGMPPIVVDADATVTVAVEGVDEVVVASDGRNVTTLPAPTEVTVERTTPPMRIAGPPSDFFAALEKLS.

Asp66 (proton acceptor) is an active-site residue. Residues 66–67, 138–139, His168, Asp170, 181–186, and Val205 each bind NAD(+); these read DG, NE, and TAYNLS.

This sequence belongs to the NAD kinase family. A divalent metal cation is required as a cofactor.

It is found in the cytoplasm. It catalyses the reaction NAD(+) + ATP = ADP + NADP(+) + H(+). In terms of biological role, involved in the regulation of the intracellular balance of NAD and NADP, and is a key enzyme in the biosynthesis of NADP. Catalyzes specifically the phosphorylation on 2'-hydroxyl of the adenosine moiety of NAD to yield NADP. The chain is NAD kinase from Halorubrum lacusprofundi (strain ATCC 49239 / DSM 5036 / JCM 8891 / ACAM 34).